The following is a 520-amino-acid chain: Laccase (520 aa).

Positions 1-21 (MSRFQSLLAFVVASLAAVAHA) are cleaved as a signal peptide. 2 consecutive Plastocyanin-like domains span residues 23-148 (IGPT…FVVY) and 160-302 (VDND…ILRY). Residues N72 and N75 are each glycosylated (N-linked (GlcNAc...) asparagine). Residues H85, H87, H130, and H132 each coordinate Cu cation. Intrachain disulfides connect C106–C509 and C138–C226. 3 N-linked (GlcNAc...) asparagine glycosylation sites follow: N210, N229, and N354. The Plastocyanin-like 3 domain maps to 369 to 491 (TVPVLLQIIS…AGFAVVFAED (123 aa)). Cu cation-binding residues include H416, H419, H421, H473, C474, H475, and H479.

Belongs to the multicopper oxidase family. The cofactor is Cu cation.

The protein resides in the secreted. The enzyme catalyses 4 hydroquinone + O2 = 4 benzosemiquinone + 2 H2O. Lignin degradation and detoxification of lignin-derived products. Has activity towards guaiacol. This is Laccase from Trametes hirsuta (White-rot fungus).